Reading from the N-terminus, the 671-residue chain is Transcriptional regulator Kaiso (671 aa).

The interval 1–103 is interaction with NCOR1; sequence MESRKLISAT…RADLLDELIK (103 aa). The interval 1-136 is self-association; it reads MESRKLISAT…SGTEQDGTAE (136 aa). The BTB domain maps to 32-94; sequence CDVTVIVEDR…IYSSKVVRVR (63 aa). Over residues 127 to 144 the composition is skewed to polar residues; that stretch reads SGTEQDGTAETLPSSSSD. Residues 127-161 form a disordered region; the sequence is SGTEQDGTAETLPSSSSDKSLDMEKSKDEAQDNGA. Positions 145-156 are enriched in basic and acidic residues; that stretch reads KSLDMEKSKDEA. Residues Lys151 and Lys153 each participate in a glycyl lysine isopeptide (Lys-Gly) (interchain with G-Cter in SUMO2) cross-link. Thr251 is subject to Phosphothreonine. The segment at 298–571 is interaction with CBFA2T3; the sequence is LPNHMSSSVN…FMSSHIKSVH (274 aa). Residues 332–365 form a disordered region; sequence IIDDDDDIISSSPDSAVSNTSLVPQADNSKSTTL. Positions 347–365 are enriched in polar residues; that stretch reads AVSNTSLVPQADNSKSTTL. Residues Lys388, Lys405, Lys412, and Lys447 each participate in a glycyl lysine isopeptide (Lys-Gly) (interchain with G-Cter in SUMO2) cross-link. Residues 451–461 are compositionally biased toward basic and acidic residues; that stretch reads DGGEAKLDNEL. The disordered stretch occupies residues 451-474; that stretch reads DGGEAKLDNELPKTSGSEPPNKRM. An interaction with CTNND1 region spans residues 452–671; that stretch reads GGEAKLDNEL…EFEFIIPESY (220 aa). Residues Lys463, Lys472, and Lys477 each participate in a glycyl lysine isopeptide (Lys-Gly) (interchain with G-Cter in SUMO2) cross-link. A Nuclear localization signal motif is present at residues 469 to 478; that stretch reads PPNKRMKVKH. 3 C2H2-type zinc fingers span residues 492 to 514, 520 to 542, and 548 to 571; these read YICIVCKRSYVCLTSLRRHFNIH, YQCRYCDKVFPLAEYRTKHEIHH, and YQCLTCGKSFINYQFMSSHIKSVH. Residues 512 to 637 are required for DNA-binding; the sequence is NIHSWEKKYQ…TSTPPQNKST (126 aa). Glycyl lysine isopeptide (Lys-Gly) (interchain with G-Cter in SUMO2) cross-links involve residues Lys537, Lys568, Lys580, Lys609, and Lys616.

As to quaternary structure, interacts with NCOR1. Self-associates. Interacts with CTNND1, and this interaction inhibits binding to both methylated and non-methylated DNA. Interacts with CTNND2. Interacts with KPNA2/RCH1, which may mediate nuclear import of this protein. Interacts with CBFA2T3. As to expression, expressed in brain, heart, kidney, liver, lung, neuromuscular junctions, skeletal muscle, spleen and testis.

Its subcellular location is the nucleus. In terms of biological role, transcriptional regulator with bimodal DNA-binding specificity. Binds to methylated CpG dinucleotides in the consensus sequence 5'-CGCG-3' and also binds to the non-methylated consensus sequence 5'-CTGCNA-3' also known as the consensus kaiso binding site (KBS). May recruit the N-CoR repressor complex to promote histone deacetylation and the formation of repressive chromatin structures in target gene promoters. Contributes to the repression of target genes of the Wnt signaling pathway. May also activate transcription of a subset of target genes by the recruitment of CTNND2. Represses expression of MMP7 in conjunction with transcriptional corepressors CBFA2T3, CBFA2T2 and RUNX1T1. The polypeptide is Transcriptional regulator Kaiso (Zbtb33) (Mus musculus (Mouse)).